Here is a 483-residue protein sequence, read N- to C-terminus: UDP-N-acetylmuramyl-tripeptide synthetase (483 aa).

Residue serine 43 coordinates UDP-N-acetyl-alpha-D-muramoyl-L-alanyl-D-glutamate. Position 116-122 (116-122) interacts with ATP; that stretch reads GTKGKTT. UDP-N-acetyl-alpha-D-muramoyl-L-alanyl-D-glutamate-binding positions include 160–161, serine 187, and arginine 195; that span reads TT. An N6-carboxylysine modification is found at lysine 229.

It belongs to the MurCDEF family. MurE subfamily. In terms of processing, carboxylation is probably crucial for Mg(2+) binding and, consequently, for the gamma-phosphate positioning of ATP.

The protein resides in the cytoplasm. It functions in the pathway cell wall biogenesis; peptidoglycan biosynthesis. Functionally, catalyzes the addition of an amino acid to the nucleotide precursor UDP-N-acetylmuramoyl-L-alanyl-D-glutamate (UMAG) in the biosynthesis of bacterial cell-wall peptidoglycan. The protein is UDP-N-acetylmuramyl-tripeptide synthetase of Lactococcus lactis subsp. cremoris (strain SK11).